Here is a 496-residue protein sequence, read N- to C-terminus: Probable CtpA-like serine protease (496 aa).

The span at 1 to 16 (MDDKQHTSSSDDERAE) shows a compositional bias: basic and acidic residues. The segment at 1–27 (MDDKQHTSSSDDERAEIATSNQDQETN) is disordered. The span at 18 to 27 (ATSNQDQETN) shows a compositional bias: polar residues. Residues 39–59 (FISILIGTILITAVITVVAYI) traverse the membrane as a helical segment. The 83-residue stretch at 124–206 (TKSFNEGVSG…TEVTLTVQRG (83 aa)) folds into the PDZ domain. Residues S329, D340, and K354 each act as charge relay system in the active site.

Belongs to the peptidase S41A family.

Its subcellular location is the cell membrane. The polypeptide is Probable CtpA-like serine protease (Staphylococcus aureus (strain MSSA476)).